Here is an 867-residue protein sequence, read N- to C-terminus: G-protein coupled receptor family C group 6 member A (867 aa).

An N-terminal signal peptide occupies residues 1 to 19 (MDLMSFILLWAGLMKVAEA). The Extracellular portion of the chain corresponds to 20–566 (SIAQFSQLGA…EYFDWNSGFA (547 aa)). 10 N-linked (GlcNAc...) asparagine glycosylation sites follow: Asn51, Asn55, Asn97, Asn296, Asn308, Asn336, Asn356, Asn370, Asn527, and Asn547. The chain crosses the membrane as a helical span at residues 567 to 587 (IVLLILAALGVLLLFFMSALF). The Cytoplasmic portion of the chain corresponds to 588–602 (FWQRHSPVVKAAGGP). The chain crosses the membrane as a helical span at residues 603–623 (LCHLILVSLLGSFISVVFFVG). The Extracellular segment spans residues 624 to 634 (EPSDLTCRARQ). Residues 635 to 655 (VIFGFSFTLCVSCILVKSLKI) traverse the membrane as a helical segment. The Cytoplasmic portion of the chain corresponds to 656-675 (LLAFEMNFELKELLCMLYKP). A helical membrane pass occupies residues 676–696 (YMIVSVGMGVQIIICTVWLTL). At 697–716 (YKPFKDKEVQTESILLECNE) the chain is on the extracellular side. A helical transmembrane segment spans residues 717 to 737 (GFYVMFWLMLGYIALLALFCF). The Cytoplasmic portion of the chain corresponds to 738–754 (TFAYIGRKLPQKYNEAK). Residues 755–775 (FITFSMVICLMAWIIFIPIHV) traverse the membrane as a helical segment. The Extracellular portion of the chain corresponds to 776–781 (TTSGKY). Residues 782 to 802 (VPAVEMVVILISNYGILSCHF) form a helical membrane-spanning segment. Residues 803–867 (LPKSYIILFK…LSFVPEEKHE (65 aa)) are Cytoplasmic-facing.

The protein belongs to the G-protein coupled receptor 3 family. As to quaternary structure, homodimer; disulfide-linked.

Its subcellular location is the cell membrane. Its function is as follows. Olfactory receptor that is activated by amino acids that act as potent odorants in fish. Displays preference for acidic amino acids such as Glu over basic amino acids. This is G-protein coupled receptor family C group 6 member A (gprc6a) from Danio rerio (Zebrafish).